The following is a 534-amino-acid chain: Steroid hormone receptor family member cnr14 (534 aa).

2 disordered regions span residues 30–53 and 119–139; these read SGKT…QWSH and PATS…GHTT. Residues 119–130 show a composition bias toward low complexity; sequence PATSVTSSLSPP. The segment at residues 148 to 223 is a DNA-binding region (nuclear receptor); the sequence is ISFCKVCGDK…SGMSKDSVRQ (76 aa). 2 NR C4-type zinc fingers span residues 151-171 and 187-211; these read CKVC…CEGC and CLKQ…FKKC. The NR LBD domain occupies 252 to 493; it reads EVDAVYEAVL…PPLVVEMFQL (242 aa). The interval 502 to 534 is disordered; the sequence is HNNQENQYTPAPEHQSPQPQQPTPNQQQTPVHC. Residues 511 to 534 are compositionally biased toward low complexity; that stretch reads PAPEHQSPQPQQPTPNQQQTPVHC.

This sequence belongs to the nuclear hormone receptor family. NR1 subfamily. As to expression, most abundant in embryos.

The protein resides in the nucleus. In terms of biological role, transcriptional regulator which is involved in the sex determination and X chromosome dosage compensation pathways. Directly binds to five 5'-A(G/C)(G/T)(T/G)C(A/G)-3' sites in the promoter of sex-determining factor xol-1 to negatively regulate its expression and promote hermaphrodite development. Together with fox-1 is involved in making the distinction between one and two X-chromosomes. Plays a role in the fox-1-mediated repression of the functionally active isoform (isoform b) of the sex-determining factor xol-1 gene to promote hermaphrodite development. Plays a role in the association of the dosage compensation complex proteins dpy-27 and sdc-3 with the hermaphrodite X chromosomes. The chain is Steroid hormone receptor family member cnr14 from Caenorhabditis elegans.